The sequence spans 215 residues: Ribonuclease S-6 (215 aa).

The signal sequence occupies residues 1 to 22; the sequence is MFNLPLTSVFVIFLFALSPIYG. Position 32 (glutamine 32) interacts with RNA. Cysteine 38 and cysteine 43 are disulfide-bonded. N-linked (GlcNAc...) asparagine glycosylation is present at asparagine 49. Histidine 53 is an RNA binding site. The active-site Proton donor is histidine 53. N-linked (GlcNAc...) asparagine glycosylation occurs at asparagine 59. Cysteine 67 and cysteine 116 are joined by a disulfide. Residues 91–92, arginine 94, phenylalanine 105, 108–109, and 112–113 each bind RNA; these read DL, RE, and KH. Residue glutamate 109 is part of the active site. Histidine 113 serves as the catalytic Proton acceptor. 2 N-linked (GlcNAc...) asparagine glycosylation sites follow: asparagine 160 and asparagine 172. Intrachain disulfides connect cysteine 175/cysteine 204 and cysteine 187/cysteine 198.

The protein belongs to the RNase T2 family.

It is found in the secreted. It localises to the extracellular space. It carries out the reaction a ribonucleotidyl-ribonucleotide-RNA + H2O = a 3'-end 3'-phospho-ribonucleotide-RNA + a 5'-end dephospho-ribonucleoside-RNA + H(+). Self-incompatibility (SI) is the inherited ability of a flowering plant to prevent self-fertilization by discriminating between self and non-self pollen during pollination. In many species of the Solanaceae, self-incompatibility is controlled by the single, multiallelic locus S. This stylar glycoprotein is associated with expression of self-incompatibility in potato. The sequence is that of Ribonuclease S-6 from Nicotiana alata (Winged tobacco).